We begin with the raw amino-acid sequence, 297 residues long: uncharacterized protein (297 aa).

WD repeat units lie at residues 12–51, 54–93, 96–135, 140–177, 179–217, 222–261, and 265–297; these read KAKE…CIHE, GHGH…VDRR, GHLA…FSPI, DAKD…LSSD, FSHP…ILKS, KNME…QITS, and VGTP…YQYN.

This sequence belongs to the WD repeat MORG1 family.

The protein resides in the cytoplasm. It localises to the nucleus. This is an uncharacterized protein from Schizosaccharomyces pombe (strain 972 / ATCC 24843) (Fission yeast).